The chain runs to 435 residues: 3-phosphoshikimate 1-carboxyvinyltransferase (435 aa).

Positions 15, 16, and 20 each coordinate 3-phosphoshikimate. K15 is a binding site for phosphoenolpyruvate. Phosphoenolpyruvate contacts are provided by G96 and R124. The 3-phosphoshikimate site is built by S169, Q171, S195, D319, and K346. Position 171 (Q171) interacts with phosphoenolpyruvate. D319 acts as the Proton acceptor in catalysis. Phosphoenolpyruvate is bound by residues R350 and R395.

It belongs to the EPSP synthase family. As to quaternary structure, monomer.

The protein resides in the cytoplasm. It catalyses the reaction 3-phosphoshikimate + phosphoenolpyruvate = 5-O-(1-carboxyvinyl)-3-phosphoshikimate + phosphate. Its pathway is metabolic intermediate biosynthesis; chorismate biosynthesis; chorismate from D-erythrose 4-phosphate and phosphoenolpyruvate: step 6/7. Its function is as follows. Catalyzes the transfer of the enolpyruvyl moiety of phosphoenolpyruvate (PEP) to the 5-hydroxyl of shikimate-3-phosphate (S3P) to produce enolpyruvyl shikimate-3-phosphate and inorganic phosphate. This Chlorobium phaeobacteroides (strain BS1) protein is 3-phosphoshikimate 1-carboxyvinyltransferase.